The following is a 309-amino-acid chain: uncharacterized protein (309 aa).

This is an uncharacterized protein from Aedes vexans (Inland floodwater mosquito).